The sequence spans 89 residues: UPF0335 protein Nham_1221 (89 aa).

Belongs to the UPF0335 family.

The protein is UPF0335 protein Nham_1221 of Nitrobacter hamburgensis (strain DSM 10229 / NCIMB 13809 / X14).